We begin with the raw amino-acid sequence, 908 residues long: Protein translocase subunit SecA (908 aa).

ATP-binding positions include Gln-87, 105-109 (GEGKT), and Asp-512. The tract at residues 876 to 908 (QAPMIRDGEKVGRNDPCPCGSGRKYKQCHGKLS) is disordered. Zn(2+) contacts are provided by Cys-892, Cys-894, Cys-903, and His-904. Residues 898-908 (RKYKQCHGKLS) are compositionally biased toward basic residues.

The protein belongs to the SecA family. Monomer and homodimer. Part of the essential Sec protein translocation apparatus which comprises SecA, SecYEG and auxiliary proteins SecDF-YajC and YidC. Zn(2+) serves as cofactor.

It localises to the cell inner membrane. The protein resides in the cytoplasm. It carries out the reaction ATP + H2O + cellular proteinSide 1 = ADP + phosphate + cellular proteinSide 2.. In terms of biological role, part of the Sec protein translocase complex. Interacts with the SecYEG preprotein conducting channel. Has a central role in coupling the hydrolysis of ATP to the transfer of proteins into and across the cell membrane, serving both as a receptor for the preprotein-SecB complex and as an ATP-driven molecular motor driving the stepwise translocation of polypeptide chains across the membrane. This Shewanella baltica (strain OS185) protein is Protein translocase subunit SecA.